Consider the following 355-residue polypeptide: Protein HGH1 homolog (355 aa).

The segment at 324-355 (DEEGDPTPEEIEQMNKKQKLEDEDAQFETDEI) is disordered. Composition is skewed to acidic residues over residues 325 to 335 (EEGDPTPEEIE) and 344 to 355 (EDEDAQFETDEI).

This sequence belongs to the HGH1 family.

The sequence is that of Protein HGH1 homolog from Dictyostelium discoideum (Social amoeba).